Here is a 551-residue protein sequence, read N- to C-terminus: Glucans biosynthesis protein D (551 aa).

The tat-type signal signal peptide spans 1–32 (MDRRRFIKGSMAMAAVCGTSGIASLFSQAAFA).

It belongs to the OpgD/OpgG family. Post-translationally, predicted to be exported by the Tat system. The position of the signal peptide cleavage has not been experimentally proven.

It localises to the periplasm. It functions in the pathway glycan metabolism; osmoregulated periplasmic glucan (OPG) biosynthesis. Functionally, probably involved in the control of the structural glucose backbone of osmoregulated periplasmic glucans (OPGs). The polypeptide is Glucans biosynthesis protein D (Escherichia coli O9:H4 (strain HS)).